We begin with the raw amino-acid sequence, 126 residues long: Fluoride-specific ion channel FluC (126 aa).

The next 4 membrane-spanning stretches (helical) occupy residues 6–26, 36–56, 69–89, and 99–119; these read FLAVGVGAALGAWLRWALAIL, YGTLAANLVGGYLIGVAVGFF, LVITGFLGGLTTFSTFSGEVV, and IGVLHIVAHLGGSLFLTMLGF. Na(+) contacts are provided by Gly76 and Thr79.

The protein belongs to the fluoride channel Fluc/FEX (TC 1.A.43) family.

Its subcellular location is the cell inner membrane. It carries out the reaction fluoride(in) = fluoride(out). With respect to regulation, na(+) is not transported, but it plays an essential structural role and its presence is essential for fluoride channel function. Its function is as follows. Fluoride-specific ion channel. Important for reducing fluoride concentration in the cell, thus reducing its toxicity. The polypeptide is Fluoride-specific ion channel FluC (Ralstonia pickettii (strain 12J)).